A 1041-amino-acid chain; its full sequence is FHIP family protein CG3558 (1041 aa).

At serine 490 the chain carries Phosphoserine. 5 disordered regions span residues 619 to 648 (RPAD…SSSL), 792 to 818 (KGNE…QGQL), 858 to 879 (SMFS…SASS), 903 to 947 (DGRG…SNSS), and 959 to 986 (SNTT…SEPA). The segment covering 628–637 (TDTTVATTAS) has biased composition (polar residues). Phosphoserine is present on serine 797. A compositionally biased stretch (polar residues) spans 800 to 818 (HHSQQQQMVTNSGQQQGQL). Residues 903–925 (DGRGISQAQTSAGTCETSLSTQP) are compositionally biased toward polar residues. The span at 927–947 (AGASRTGANATSTAASGSNSS) shows a compositional bias: low complexity. Positions 959–968 (SNTTTHSAST) are enriched in polar residues.

Belongs to the FHIP family.

The sequence is that of FHIP family protein CG3558 from Drosophila melanogaster (Fruit fly).